The primary structure comprises 256 residues: Nuclear shuttle protein (256 aa).

The interval 18–50 (VSRNQSSKRGTFVRRTDGKRRKGPSSKAHDEPK) is disordered. A Bipartite nuclear localization signal motif is present at residues 21–42 (NQSSKRGTFVRRTDGKRRKGPS). The short motif at 81–96 (VLGKIEPNRSRSYIKL) is the Nuclear localization signal element. Residues 150-187 (EIFGARIHSHGNLAITPGLKDRYYVLHVLKRVLSVEKD) form an interaction with Arabidopsis thaliana NSI protein region.

This sequence belongs to the begomovirus nuclear shuttle protein family. As to quaternary structure, binds to single-stranded and double-stranded viral DNA. Interacts with the host nuclear shuttle interacting (NSI) protein. This interaction may allow NSP to recruit NSI monomers to the viral genome and thus regulate nuclear export of viral genome by NSP.

Its subcellular location is the host nucleus. The protein localises to the host cytoplasm. It is found in the host cell membrane. In terms of biological role, binds to the genomic viral ssDNA, shuttles it into and out of the cell nucleus. Begomoviruses use 2 proteins to transport their DNA from cell to cell. The nuclear shuttle protein (NSP) shuttles it between nucleus and cytoplasm and the movement protein (MP) probably transports the DNA-NSP complex to the cell periphery and facilitates movement across the cell wall. The chain is Nuclear shuttle protein from Brassica oleracea (Wild cabbage).